Reading from the N-terminus, the 196-residue chain is Protein hunchback (196 aa).

Disordered stretches follow at residues 16–56 (SHHH…SHTN), 63–82 (LKQQ…QQPM), and 156–196 (LTPP…KYMA). Residues 17 to 29 (HHHHHHHAHHSHH) show a composition bias toward basic residues. Composition is skewed to low complexity over residues 33–43 (SNSNASNSPHQ) and 65–80 (QQQQ…QQQQ). Residues 177 to 196 (EPEKEHDLMSNSSEDMKYMA) show a composition bias toward basic and acidic residues.

The protein belongs to the hunchback C2H2-type zinc-finger protein family.

The protein resides in the nucleus. In terms of biological role, gap class segmentation protein that controls development of head structures. The protein is Protein hunchback (hb) of Drosophila adunca (Fruit fly).